A 317-amino-acid chain; its full sequence is SWI/SNF-related matrix-associated actin-dependent regulator of chromatin subfamily E member 1-related (317 aa).

Positions 1-17 (MSHGPKQPGAAAAPAGG) are enriched in low complexity. Residues 1–71 (MSHGPKQPGA…RKKILPNGPK (71 aa)) are disordered. A Glycyl lysine isopeptide (Lys-Gly) (interchain with G-Cter in SUMO2) cross-link involves residue Lys-31. The span at 31-52 (KQERGEGPRAGEKGSHEEEPVK) shows a compositional bias: basic and acidic residues. Over residues 53–65 (KRGWPKGKKRKKI) the composition is skewed to basic residues. The HMG box DNA-binding region spans 70-138 (PKAPVTGYVR…QYMKELRAYQ (69 aa)). The residue at position 160 (Ser-160) is a Phosphoserine. The stretch at 190–257 (EEFLDQNKAR…LQQQLQAVRQ (68 aa)) forms a coiled coil.

In terms of assembly, component of a BHC histone deacetylase complex that contains HDAC1, HDAC2, HMG20B/BRAF35, KDM1A, RCOR1/CoREST and PHF21A/BHC80. The BHC complex may also contain ZMYM2, ZNF217, ZMYM3, GSE1 and GTF2I. Interacts with the BRCA2 tumor suppressor protein. Interacts with DTNB. As to expression, ubiquitously expressed in adult tissues.

The protein localises to the nucleus. It localises to the chromosome. Functionally, required for correct progression through G2 phase of the cell cycle and entry into mitosis. Required for RCOR1/CoREST mediated repression of neuronal specific gene promoters. The polypeptide is SWI/SNF-related matrix-associated actin-dependent regulator of chromatin subfamily E member 1-related (HMG20B) (Homo sapiens (Human)).